We begin with the raw amino-acid sequence, 274 residues long: Hydroxyethylthiazole kinase (274 aa).

Residue Met50 participates in substrate binding. Residues Arg126 and Ser171 each coordinate ATP. Ala200 lines the substrate pocket.

It belongs to the Thz kinase family. Requires Mg(2+) as cofactor.

The enzyme catalyses 5-(2-hydroxyethyl)-4-methylthiazole + ATP = 4-methyl-5-(2-phosphooxyethyl)-thiazole + ADP + H(+). Its pathway is cofactor biosynthesis; thiamine diphosphate biosynthesis; 4-methyl-5-(2-phosphoethyl)-thiazole from 5-(2-hydroxyethyl)-4-methylthiazole: step 1/1. Functionally, catalyzes the phosphorylation of the hydroxyl group of 4-methyl-5-beta-hydroxyethylthiazole (THZ). This is Hydroxyethylthiazole kinase from Acinetobacter baylyi (strain ATCC 33305 / BD413 / ADP1).